Here is a 179-residue protein sequence, read N- to C-terminus: Gut granule loss protein 3 (179 aa).

Residues 40 to 59 (DLDSASSGVGSSTCTEEQES) are disordered. Residues 42–54 (DSASSGVGSSTCT) show a composition bias toward polar residues.

The protein is Gut granule loss protein 3 (glo-3) of Caenorhabditis elegans.